The primary structure comprises 449 residues: Metacaspase-1 (449 aa).

Residues 1-132 (MFPGQGRHTY…YSRPPTNQQS (132 aa)) form a disordered region. A compositionally biased stretch (low complexity) spans 10–26 (YGGQQQLLQLQQYNYGP). Pro residues predominate over residues 27–55 (PQGPPPNGYGPPPGPPPNGYGPPPGPPPQ). The segment covering 56–66 (NSWGYGNPSGT) has biased composition (polar residues). 2 stretches are compositionally biased toward low complexity: residues 67-91 (QSSNQQRYQGQQSGQQNYNGGYQRP) and 98-112 (QSGNQRGQPGQNGEP). The segment covering 119–132 (GSGQYSRPPTNQQS) has biased composition (polar residues). Catalysis depends on residues His-232 and Cys-293.

It belongs to the peptidase C14B family.

Its function is as follows. Involved in cell death (apoptosis). The chain is Metacaspase-1 (MCA1) from Lodderomyces elongisporus (strain ATCC 11503 / CBS 2605 / JCM 1781 / NBRC 1676 / NRRL YB-4239) (Yeast).